The following is a 130-amino-acid chain: Small ribosomal subunit protein uS11c (130 aa).

This sequence belongs to the universal ribosomal protein uS11 family. As to quaternary structure, part of the 30S ribosomal subunit.

The protein resides in the plastid. Its subcellular location is the chloroplast. The chain is Small ribosomal subunit protein uS11c from Mesostigma viride (Green alga).